The sequence spans 411 residues: Arginine deiminase 1 (411 aa).

The active-site Amidino-cysteine intermediate is the C401.

It belongs to the arginine deiminase family.

The protein resides in the cytoplasm. The enzyme catalyses L-arginine + H2O = L-citrulline + NH4(+). It participates in amino-acid degradation; L-arginine degradation via ADI pathway; carbamoyl phosphate from L-arginine: step 1/2. The polypeptide is Arginine deiminase 1 (arcA1) (Staphylococcus epidermidis (strain ATCC 12228 / FDA PCI 1200)).